A 123-amino-acid polypeptide reads, in one-letter code: Guanine nucleotide exchange factor MSS4 (123 aa).

N-acetylmethionine is present on Met-1. The MSS4 domain occupies 9–123 (ELVSAEGRNR…YVALERVSHE (115 aa)). Zn(2+) contacts are provided by Cys-23, Cys-26, Cys-94, and Cys-97.

Belongs to the DSS4/MSS4 family. As to quaternary structure, interacts with RAB8A. Ubiquitous.

Functionally, guanine-nucleotide-releasing protein that acts on members of the SEC4/YPT1/RAB subfamily. Stimulates GDP release from both YPT1, RAB3A and RAB10, but is less active on these proteins than on the SEC4 protein. Might play a general role in vesicular transport. This Rattus norvegicus (Rat) protein is Guanine nucleotide exchange factor MSS4 (Rabif).